Consider the following 514-residue polypeptide: Sugar transport protein 4 (514 aa).

Residues 1–22 lie on the Cytoplasmic side of the membrane; sequence MAGGFVSQTPGVRNYNYKLTPK. 12 helical membrane passes run 23 to 43, 80 to 100, 117 to 137, 140 to 160, 172 to 192, 202 to 222, 283 to 303, 321 to 341, 348 to 368, 387 to 407, 426 to 446, and 451 to 471; these read VFVT…DLGI, LLTL…LFAS, FTFF…MLLI, ILLG…LSEM, GFQV…YFTA, ISLG…LILP, LIMT…VITF, LSAM…VFTV, ILFL…GAMI, LIVA…GPLG, INVS…LTML, and FGLF…IYLM. The Cytoplasmic segment spans residues 472–514; sequence LPETKNVPIEEMNRVWKAHWFWGKFIPDEAVNMGAAEMQQKSV.

It belongs to the major facilitator superfamily. Sugar transporter (TC 2.A.1.1) family. As to expression, mostly in flowers and roots, especially in anthers, including pollen, and root tips. Also present in some hydathodes.

It is found in the cell membrane. Mediates an active uptake of hexoses, probably by sugar/hydrogen symport. Can transport glucose, methylglucose, galactose, xylose and mannose, but not fructose. The sequence is that of Sugar transport protein 4 (STP4) from Arabidopsis thaliana (Mouse-ear cress).